Consider the following 374-residue polypeptide: Dual-specificity RNA methyltransferase RlmN (374 aa).

The active-site Proton acceptor is the Glu91. Positions 97–340 (EDDRGTLCIS…TTVRKTRGDD (244 aa)) constitute a Radical SAM core domain. A disulfide bridge connects residues Cys104 and Cys345. 3 residues coordinate [4Fe-4S] cluster: Cys111, Cys115, and Cys118. Residues 165-166 (GE), Ser197, 219-221 (SLH), and Asn302 each bind S-adenosyl-L-methionine. The active-site S-methylcysteine intermediate is Cys345.

It belongs to the radical SAM superfamily. RlmN family. [4Fe-4S] cluster serves as cofactor.

The protein localises to the cytoplasm. It catalyses the reaction adenosine(2503) in 23S rRNA + 2 reduced [2Fe-2S]-[ferredoxin] + 2 S-adenosyl-L-methionine = 2-methyladenosine(2503) in 23S rRNA + 5'-deoxyadenosine + L-methionine + 2 oxidized [2Fe-2S]-[ferredoxin] + S-adenosyl-L-homocysteine. The catalysed reaction is adenosine(37) in tRNA + 2 reduced [2Fe-2S]-[ferredoxin] + 2 S-adenosyl-L-methionine = 2-methyladenosine(37) in tRNA + 5'-deoxyadenosine + L-methionine + 2 oxidized [2Fe-2S]-[ferredoxin] + S-adenosyl-L-homocysteine. Functionally, specifically methylates position 2 of adenine 2503 in 23S rRNA and position 2 of adenine 37 in tRNAs. m2A2503 modification seems to play a crucial role in the proofreading step occurring at the peptidyl transferase center and thus would serve to optimize ribosomal fidelity. The protein is Dual-specificity RNA methyltransferase RlmN of Acidovorax sp. (strain JS42).